Reading from the N-terminus, the 149-residue chain is Calmodulin-like protein 3 (149 aa).

EF-hand domains follow at residues 8-43 (EQVT…LGQN), 44-79 (PTEA…KMKD), 81-116 (DNEE…LGEK), and 117-149 (LSDE…LVSK). Ca(2+)-binding residues include Asp21, Asp23, Asp25, Cys27, Glu32, Asp57, Asp59, Asn61, Thr63, Glu68, Asp94, Asp96, Asn98, Glu105, Asp130, Asp132, Asp134, Gln136, and Glu141.

Belongs to the calmodulin family. As to quaternary structure, interacts with MYO10, the interaction is calcium-dependent and essential for MYO10 function in filopodial extension. As to expression, expressed in normal mammary, prostate, cervical, and epidermal tissues. It is greatly reduced or undetectable in transformed cells.

In terms of biological role, may function as a specific light chain of unconventional myosin-10 (MYO10), also enhances MYO10 translation, possibly by acting as a chaperone for the emerging MYO10 heavy chain protein. May compete with calmodulin by binding, with different affinities, to cellular substrates. This is Calmodulin-like protein 3 (CALML3) from Homo sapiens (Human).